Reading from the N-terminus, the 452-residue chain is Protein FAM222A (452 aa).

Belongs to the FAM222 family.

This Homo sapiens (Human) protein is Protein FAM222A (FAM222A).